Here is a 704-residue protein sequence, read N- to C-terminus: DNA-directed DNA polymerase (704 aa).

The segment at 1 to 187 (MIVSDIEANA…TKALLEKLLS (187 aa)) is 3'-5'exonuclease. Residues D5, E7, and D174 each coordinate Mg(2+). Residues 202-704 (GYTTFWSESL…KMGPNWAICH (503 aa)) form a polymerase region. The segment at 262 to 338 (GSWYQPKGGT…VEHVVFNPSS (77 aa)) is binding to host TrxA. 2 residues coordinate Mg(2+): D475 and A476. 4 residues coordinate substrate: H506, R518, K522, and Y526. A Mg(2+)-binding site is contributed by D654.

The protein belongs to the DNA polymerase type-A family. In terms of assembly, composed of two subunits. One is encoded by the phage and the other is encoded by the host thioredoxin. Interacts with DNA primase/helicase; this interaction is essential for the coordination of DNA unwinding and nucleotide polymerization on duplex DNA. Interacts with the ssDNA-binding protein. Part of the replicase complex that includes the DNA polymerase, thioredoxin, the primase/helicase and the single-stranded DNA binding protein. It depends on Mg(2+) as a cofactor.

The enzyme catalyses DNA(n) + a 2'-deoxyribonucleoside 5'-triphosphate = DNA(n+1) + diphosphate. In terms of biological role, replicates viral genomic DNA. This polymerase possesses two enzymatic activities: DNA synthesis (polymerase) and an exonucleolytic activity that degrades single-stranded DNA in the 3'-5' direction. Non-processive DNA polymerase that achieves processivity by binding to host thioredoxin (TrxA). This interaction increases the rate of dNTP incorporation to yield a processivity of approximately 800 nucleotides (nt) per binding event. Interacts with DNA helicase gp4 to coordinate nucleotide polymerization with unwinding of the DNA. The leading strand is synthesized continuously while synthesis of the lagging strand requires the synthesis of oligoribonucleotides by the primase domain of gp4. The protein is DNA-directed DNA polymerase of Escherichia phage T7 (Bacteriophage T7).